Here is a 198-residue protein sequence, read N- to C-terminus: Mitrocomin (198 aa).

A propeptide spanning residues 1–8 (MSMGSRYA) is cleaved from the precursor. 3 EF-hand domains span residues 19 to 54 (KWIARHKHMFNFLDINSNGQINLNEMVHKASNIICK), 118 to 147 (DALFDIIDKDRNGSVSLDEWIQYTHCAGIQ), and 148 to 183 (QSRGQCEATFAHCDLDGDGKLDVDEMTRQHLGFWYS). Asp-32, Asn-34, Asn-36, Gln-38, Glu-43, Asp-125, Asp-127, Asn-129, Ser-131, Glu-136, Asp-161, Asp-163, Asp-165, Lys-167, and Glu-172 together coordinate Ca(2+).

Belongs to the aequorin family.

Functionally, ca(2+)-dependent bioluminescence photoprotein. Displays an emission peak at 470 nm (blue light). Trace amounts of calcium ion trigger the intramolecular oxidation of the chromophore, coelenterazine into coelenteramide and CO(2) with the concomitant emission of light. The chain is Mitrocomin (MI17) from Mitrocoma cellularia (Cross jellyfish).